Consider the following 244-residue polypeptide: 14-3-3 protein homolog 1 (244 aa).

Belongs to the 14-3-3 family.

This Echinococcus granulosus (Hydatid tapeworm) protein is 14-3-3 protein homolog 1.